We begin with the raw amino-acid sequence, 391 residues long: Ectodysplasin-A (391 aa).

Basic and acidic residues predominate over residues M1–G21. Residues M1–R28 are disordered. The Cytoplasmic segment spans residues M1 to R41. The chain crosses the membrane as a helical; Signal-anchor for type II membrane protein span at residues L42–L62. Residues E63–S391 are Extracellular-facing. 2 disordered regions span residues R72–D129 and Y146–R244. Positions T86–L96 are enriched in low complexity. Residues G180–P229 enclose the Collagen-like domain. Pro residues-rich tracts occupy residues P181–P203 and P216–P228. The 137-residue stretch at A249–L385 folds into the THD domain. N313 is a glycosylation site (N-linked (GlcNAc...) asparagine). A disulfide bridge links C332 with C346. N-linked (GlcNAc...) asparagine glycosylation is present at N372.

This sequence belongs to the tumor necrosis factor family. Homotrimer. The homotrimers may then dimerize and form higher-order oligomers. In terms of processing, N-glycosylated. Post-translationally, processing by furin produces a secreted form.

The protein localises to the cell membrane. It localises to the secreted. In terms of biological role, cytokine which is involved in epithelial-mesenchymal signaling during morphogenesis of ectodermal organs. Functions as a ligand activating the DEATH-domain containing receptors EDAR and EDA2R. Isoform TAA binds only to the receptor EDAR, while isoform TA-A2 binds exclusively to the receptor EDA2R. May also play a role in cell adhesion. Functionally, isoform TAA binds only to the receptor EDAR, while isoform TA-A2 binds exclusively to the receptor EDA2R. Isoform TA-A2 binds exclusively to the receptor EDA2R. In Mus musculus (Mouse), this protein is Ectodysplasin-A (Eda).